The chain runs to 433 residues: Glutamate-1-semialdehyde 2,1-aminomutase (433 aa).

At K271 the chain carries N6-(pyridoxal phosphate)lysine.

The protein belongs to the class-III pyridoxal-phosphate-dependent aminotransferase family. HemL subfamily. As to quaternary structure, homodimer. Pyridoxal 5'-phosphate serves as cofactor.

The protein localises to the cytoplasm. The enzyme catalyses (S)-4-amino-5-oxopentanoate = 5-aminolevulinate. It functions in the pathway porphyrin-containing compound metabolism; protoporphyrin-IX biosynthesis; 5-aminolevulinate from L-glutamyl-tRNA(Glu): step 2/2. Its pathway is porphyrin-containing compound metabolism; chlorophyll biosynthesis. The sequence is that of Glutamate-1-semialdehyde 2,1-aminomutase from Prochlorococcus marinus (strain SARG / CCMP1375 / SS120).